The primary structure comprises 141 residues: MIKLRLKRYGKKRESSYRIVAMNSDSRRDGRPLEELGFYNPRTDETRLDVPGITRRLEQGAQPTDTVRDILKKANVLELSRTGVNTQANVSVSHAESTEAITNAEPIQATANTESNEVSDSESTATATIRESEEQPPISES.

2 stretches are compositionally biased toward polar residues: residues 89–101 (NVSV…TEAI) and 109–129 (ATAN…TATI). Residues 89-141 (NVSVSHAESTEAITNAEPIQATANTESNEVSDSESTATATIRESEEQPPISES) form a disordered region.

Belongs to the bacterial ribosomal protein bS16 family.

The protein is Small ribosomal subunit protein bS16 of Trichodesmium erythraeum (strain IMS101).